We begin with the raw amino-acid sequence, 137 residues long: Acetyltransferase Atu2258 (137 aa).

Residues 1 to 137 (MNFVLSDVAD…QSITWLEKRF (137 aa)) form the N-acetyltransferase domain. Residues 66 to 68 (LFV), G74, and 108 to 110 (RTY) contribute to the CoA site.

Catalyzes the transfer of an acetyl group from acetyl coenzyme A (AcCoA) to an acceptor substrate and releases both CoA and the acetylated product. It prefers glucosamine 6-phosphate or dopamine. It can also use the thialysine, N(8)-acetylspermidine, chloramphenicol, puromycin, polymyxin B, and 4-aminobutyrate ethyl ester. The sequence is that of Acetyltransferase Atu2258 from Agrobacterium fabrum (strain C58 / ATCC 33970) (Agrobacterium tumefaciens (strain C58)).